A 273-amino-acid polypeptide reads, in one-letter code: 2,3,4,5-tetrahydropyridine-2,6-dicarboxylate N-succinyltransferase (273 aa).

Residues R106 and D143 each contribute to the substrate site.

This sequence belongs to the transferase hexapeptide repeat family. In terms of assembly, homotrimer.

Its subcellular location is the cytoplasm. The enzyme catalyses (S)-2,3,4,5-tetrahydrodipicolinate + succinyl-CoA + H2O = (S)-2-succinylamino-6-oxoheptanedioate + CoA. It functions in the pathway amino-acid biosynthesis; L-lysine biosynthesis via DAP pathway; LL-2,6-diaminopimelate from (S)-tetrahydrodipicolinate (succinylase route): step 1/3. The polypeptide is 2,3,4,5-tetrahydropyridine-2,6-dicarboxylate N-succinyltransferase (Wolbachia sp. subsp. Brugia malayi (strain TRS)).